We begin with the raw amino-acid sequence, 454 residues long: Bifunctional protein GlmU (454 aa).

Positions 1-233 (MTNRTCLAVI…RESAVGINNR (233 aa)) are pyrophosphorylase. UDP-N-acetyl-alpha-D-glucosamine is bound by residues 11–14 (LAAG), Lys-25, Gln-79, and 84–85 (GT). Residue Asp-109 participates in Mg(2+) binding. Gly-145, Glu-159, Asn-174, and Asn-231 together coordinate UDP-N-acetyl-alpha-D-glucosamine. Asn-231 is a Mg(2+) binding site. The linker stretch occupies residues 234–254 (AELAEAEAVWQQKRRRELMLS). Positions 255 to 454 (GVTLIAPETV…AEEKAKKSGG (200 aa)) are N-acetyltransferase. UDP-N-acetyl-alpha-D-glucosamine-binding residues include Arg-320 and Lys-338. Residue His-350 is the Proton acceptor of the active site. Positions 353 and 364 each coordinate UDP-N-acetyl-alpha-D-glucosamine. Acetyl-CoA is bound by residues Ala-367, 373-374 (NY), Ser-410, and Arg-427.

It in the N-terminal section; belongs to the N-acetylglucosamine-1-phosphate uridyltransferase family. In the C-terminal section; belongs to the transferase hexapeptide repeat family. In terms of assembly, homotrimer. The cofactor is Mg(2+).

It is found in the cytoplasm. The catalysed reaction is alpha-D-glucosamine 1-phosphate + acetyl-CoA = N-acetyl-alpha-D-glucosamine 1-phosphate + CoA + H(+). The enzyme catalyses N-acetyl-alpha-D-glucosamine 1-phosphate + UTP + H(+) = UDP-N-acetyl-alpha-D-glucosamine + diphosphate. Its pathway is nucleotide-sugar biosynthesis; UDP-N-acetyl-alpha-D-glucosamine biosynthesis; N-acetyl-alpha-D-glucosamine 1-phosphate from alpha-D-glucosamine 6-phosphate (route II): step 2/2. It participates in nucleotide-sugar biosynthesis; UDP-N-acetyl-alpha-D-glucosamine biosynthesis; UDP-N-acetyl-alpha-D-glucosamine from N-acetyl-alpha-D-glucosamine 1-phosphate: step 1/1. The protein operates within bacterial outer membrane biogenesis; LPS lipid A biosynthesis. Catalyzes the last two sequential reactions in the de novo biosynthetic pathway for UDP-N-acetylglucosamine (UDP-GlcNAc). The C-terminal domain catalyzes the transfer of acetyl group from acetyl coenzyme A to glucosamine-1-phosphate (GlcN-1-P) to produce N-acetylglucosamine-1-phosphate (GlcNAc-1-P), which is converted into UDP-GlcNAc by the transfer of uridine 5-monophosphate (from uridine 5-triphosphate), a reaction catalyzed by the N-terminal domain. The sequence is that of Bifunctional protein GlmU from Chelativorans sp. (strain BNC1).